The chain runs to 851 residues: Putative cell signaling protein (851 aa).

Basic and acidic residues-rich tracts occupy residues 165–176 (KLNEQDGKKSDN), 196–223 (DQAR…EETK), and 767–781 (SEER…LSHD). 2 disordered regions span residues 165–223 (KLNE…EETK) and 714–781 (DDSE…LSHD).

Post-translationally, palmitoylated.

The chain is Putative cell signaling protein from Schizosaccharomyces pombe (strain 972 / ATCC 24843) (Fission yeast).